Reading from the N-terminus, the 769-residue chain is Integrin beta-2 (769 aa).

The first 22 residues, 1 to 22 (MLCRCSPLLLLVGLLTLRSALS), serve as a signal peptide directing secretion. Pyrrolidone carboxylic acid is present on Gln23. The Extracellular segment spans residues 23–700 (QECAKYKVST…ETRECVKGPN (678 aa)). The 51-residue stretch at 24–74 (ECAKYKVSTCRDCIESGPGCAWCQKLNFSGQGEPDSVRCDTREQLLAKGCV) folds into the PSI domain. 28 disulfides stabilise this stretch: Cys25-Cys43, Cys33-Cys447, Cys36-Cys62, Cys46-Cys73, Cys191-Cys198, Cys246-Cys286, Cys386-Cys400, Cys420-Cys445, Cys449-Cys467, Cys459-Cys470, Cys472-Cys481, Cys483-Cys514, Cys497-Cys512, Cys506-Cys517, Cys519-Cys534, Cys536-Cys559, Cys541-Cys557, Cys549-Cys562, Cys564-Cys573, Cys575-Cys598, Cys582-Cys596, Cys590-Cys601, Cys603-Cys612, Cys615-Cys618, Cys622-Cys662, Cys628-Cys647, Cys631-Cys643, and Cys670-Cys695. N-linked (GlcNAc...) asparagine glycans are attached at residues Asn50 and Asn116. The region spanning 124–363 (GYPIDLYYLM…ELIKNAYNKL (240 aa)) is the VWFA domain. Ser136 and Ser138 together coordinate Mg(2+). Ca(2+) is bound by residues Ser138, Asp141, Asp142, and Asp173. Ca(2+) is bound by residues Asn229, Asp231, Pro233, and Glu234. Glu234 is a binding site for Mg(2+). Residue Asn254 is glycosylated (N-linked (GlcNAc...) asparagine). Ca(2+) contacts are provided by Asp264 and Glu347. Residues 397–399 (RGD) carry the Cell attachment site motif. I-EGF domains are found at residues 449-482 (CGDS…KHCE), 483-535 (CQTQ…QFCE), 536-574 (CDNM…SACQ), and 575-613 (CLKS…PLCT). Asn501 carries an N-linked (GlcNAc...) asparagine glycan. An N-linked (GlcNAc...) asparagine glycan is attached at Asn642. The chain crosses the membrane as a helical span at residues 701-723 (IAAIVGGTVGGVVLVGIFLLVIW). At 724-769 (KVLTHLSDLREYKRFEKEKLKSQWNNDNPLFKSATTTVMNPKFAER) the chain is on the cytoplasmic side. Phosphoserine occurs at positions 745 and 756. Phosphothreonine occurs at positions 758 and 760.

This sequence belongs to the integrin beta chain family. As to quaternary structure, heterodimer of an alpha and a beta subunit. The ITGB2 beta subunit associates with the ITGAL, ITGAM, ITGAX or ITGAD alpha subunits. Found in a complex with CD177 and ITGAM/CD11b. Interacts with FGR. Interacts with COPS5 and RANBP9. Interacts with FLNA (via filamin repeats 4, 9, 12, 17, 19, 21, and 23). Interacts with THBD. Both Ser-745 and Ser-756 become phosphorylated when T-cells are exposed to phorbol esters. Phosphorylation on Thr-758 (but not on Ser-756) allows interaction with 14-3-3 proteins.

The protein localises to the cell membrane. The protein resides in the membrane raft. Its function is as follows. Integrin ITGAL/ITGB2 is a receptor for ICAM1, ICAM2, ICAM3 and ICAM4. Integrin ITGAL/ITGB2 is also a receptor for the secreted form of ubiquitin-like protein ISG15; the interaction is mediated by ITGAL. Integrins ITGAM/ITGB2 and ITGAX/ITGB2 are receptors for the iC3b fragment of the third complement component and for fibrinogen. Integrin ITGAX/ITGB2 recognizes the sequence G-P-R in fibrinogen alpha-chain. Integrin ITGAM/ITGB2 recognizes P1 and P2 peptides of fibrinogen gamma chain. Integrin ITGAM/ITGB2 is also a receptor for factor X. Integrin ITGAD/ITGB2 is a receptor for ICAM3 and VCAM1. Contributes to natural killer cell cytotoxicity. Involved in leukocyte adhesion and transmigration of leukocytes including T-cells and neutrophils. Triggers neutrophil transmigration during lung injury through PTK2B/PYK2-mediated activation. Integrin alpha-L/beta-2 in association with ICAM3, contributes to apoptotic neutrophil phagocytosis by macrophages. In Sus scrofa (Pig), this protein is Integrin beta-2 (ITGB2).